The primary structure comprises 1264 residues: Valine--tRNA ligase (1264 aa).

The residue at position 2 (S2) is an N-acetylserine. In terms of domain architecture, GST C-terminal spans 89–219 (GSRAAVLVQQ…YSGARPLSHQ (131 aa)). Residues 217 to 296 (SHQPGPEAPA…GEKKDVSGPM (80 aa)) form a disordered region. Composition is skewed to basic and acidic residues over residues 234–248 (LKKE…EKFQ) and 261–275 (GEKK…KRDP). A 'HIGH' region motif is present at residues 344–354 (PNVTGSLHLGH). S437 and S527 each carry phosphoserine. At K645 the chain carries N6-acetyllysine. A 'KMSKS' region motif is present at residues 862-866 (KMSKS). K865 contributes to the ATP binding site.

Belongs to the class-I aminoacyl-tRNA synthetase family. Forms high-molecular-mass aggregates with elongation factor 1.

The catalysed reaction is tRNA(Val) + L-valine + ATP = L-valyl-tRNA(Val) + AMP + diphosphate. With respect to regulation, can be regulated by protein kinase C-dependent phosphorylation. Catalyzes the attachment of valine to tRNA(Val). The polypeptide is Valine--tRNA ligase (Homo sapiens (Human)).